Consider the following 235-residue polypeptide: Cytochrome c oxidase subunit 2 (235 aa).

The Mitochondrial intermembrane segment spans residues methionine 1–serine 14. Residues proline 15–methionine 45 form a helical membrane-spanning segment. The Mitochondrial matrix segment spans residues leucine 46 to glutamine 59. A helical membrane pass occupies residues glutamate 60–methionine 87. Over aspartate 88–isoleucine 235 the chain is Mitochondrial intermembrane. The Cu cation site is built by histidine 161, cysteine 196, glutamate 198, cysteine 200, histidine 204, and methionine 207. A Mg(2+)-binding site is contributed by glutamate 198. Tyrosine 218 carries the phosphotyrosine modification.

This sequence belongs to the cytochrome c oxidase subunit 2 family. In terms of assembly, component of the cytochrome c oxidase (complex IV, CIV), a multisubunit enzyme composed of 14 subunits. The complex is composed of a catalytic core of 3 subunits MT-CO1, MT-CO2 and MT-CO3, encoded in the mitochondrial DNA, and 11 supernumerary subunits COX4I, COX5A, COX5B, COX6A, COX6B, COX6C, COX7A, COX7B, COX7C, COX8 and NDUFA4, which are encoded in the nuclear genome. The complex exists as a monomer or a dimer and forms supercomplexes (SCs) in the inner mitochondrial membrane with NADH-ubiquinone oxidoreductase (complex I, CI) and ubiquinol-cytochrome c oxidoreductase (cytochrome b-c1 complex, complex III, CIII), resulting in different assemblies (supercomplex SCI(1)III(2)IV(1) and megacomplex MCI(2)III(2)IV(2)). Found in a complex with TMEM177, COA6, COX18, COX20, SCO1 and SCO2. Interacts with TMEM177 in a COX20-dependent manner. Interacts with COX20. Interacts with COX16. Cu cation is required as a cofactor.

It localises to the mitochondrion inner membrane. It catalyses the reaction 4 Fe(II)-[cytochrome c] + O2 + 8 H(+)(in) = 4 Fe(III)-[cytochrome c] + 2 H2O + 4 H(+)(out). Component of the cytochrome c oxidase, the last enzyme in the mitochondrial electron transport chain which drives oxidative phosphorylation. The respiratory chain contains 3 multisubunit complexes succinate dehydrogenase (complex II, CII), ubiquinol-cytochrome c oxidoreductase (cytochrome b-c1 complex, complex III, CIII) and cytochrome c oxidase (complex IV, CIV), that cooperate to transfer electrons derived from NADH and succinate to molecular oxygen, creating an electrochemical gradient over the inner membrane that drives transmembrane transport and the ATP synthase. Cytochrome c oxidase is the component of the respiratory chain that catalyzes the reduction of oxygen to water. Electrons originating from reduced cytochrome c in the intermembrane space (IMS) are transferred via the dinuclear copper A center (CU(A)) of subunit 2 and heme A of subunit 1 to the active site in subunit 1, a binuclear center (BNC) formed by heme A3 and copper B (CU(B)). The BNC reduces molecular oxygen to 2 water molecules using 4 electrons from cytochrome c in the IMS and 4 protons from the mitochondrial matrix. This is Cytochrome c oxidase subunit 2 (MT-CO2) from Didelphis virginiana (North American opossum).